Consider the following 776-residue polypeptide: Protein translocase subunit SecA 2 (776 aa).

Residues glutamine 80, glycine 98 to threonine 102, and aspartate 486 each bind ATP.

It belongs to the SecA family. In terms of assembly, monomer and homodimer. Part of the essential Sec protein translocation apparatus which comprises SecA, SecYEG and auxiliary proteins SecDF. Other proteins may also be involved.

It localises to the cell membrane. The protein resides in the cytoplasm. It carries out the reaction ATP + H2O + cellular proteinSide 1 = ADP + phosphate + cellular proteinSide 2.. In terms of biological role, part of the Sec protein translocase complex. Interacts with the SecYEG preprotein conducting channel. Has a central role in coupling the hydrolysis of ATP to the transfer of proteins into and across the cell membrane, serving as an ATP-driven molecular motor driving the stepwise translocation of polypeptide chains across the membrane. The polypeptide is Protein translocase subunit SecA 2 (Listeria innocua serovar 6a (strain ATCC BAA-680 / CLIP 11262)).